Consider the following 79-residue polypeptide: Conotoxin Cl9.4 (79 aa).

Positions 1–23 are cleaved as a signal peptide; it reads MNCYLILTVALLLTSAMTGTTTA. Residues 24–37 constitute a propeptide that is removed on maturation; that stretch reads GQLNKKGVTLREDD. Cystine bridges form between Cys-41–Cys-58, Cys-46–Cys-68, and Cys-48–Cys-73.

In terms of tissue distribution, expressed by the venom duct.

The protein localises to the secreted. This Californiconus californicus (California cone) protein is Conotoxin Cl9.4.